The following is an 823-amino-acid chain: MKEYIPGEIEPKWQKVWAESKVFETPQRSDKKKFYNLVMFPYPSGTLHVGHVKNYVIGDIVARYKRMKGYNVLHPFGYDAFGLPAENAAIKNKIHPEVWTFKNIDIIRNQIKKIGISYDWSREVITCTEEYYKWTQWIFLKLYENGLAYKKKAAVNWCPSCQTVLANEQVVDGKCERCGTEVTMKHLEQWYFKITDYAEKLLNDIDKLRGWPENVKIMQKNWIGKSTGAEIDFPVDRLDMKIKVFTTRPDTIWGVTFMAIAPESPLVEMLVTDERKDELSQFLKKVSLEDRFKRTSLEAEKEGFFLGRYAINPVTGEKIPIYVANYILYEYGTGAIMAVPAHDQRDFDFAKKYGISIRVVIDNPEESIDVEKMEKAYEEEGIMVNSGPFNGMRSTLALEKIIEYLEEKGIGKRSVQYKLRDWLISRQRYWGAPIPIVYCEKCGIVPVPEKDLPVKLPKDVEFLPTGQSPLSLDEQFLNTTCPKCGGPAKREADTMDTFVDSSWYYLRYINPKLEDKPFDTEDINYWMPVDQYIGGVEHAVLHLLYSRFITKVLYDLGYLKFEEPFENLFTQGMIYKDGWKMSKSKGNVVSPDEMIEKYGADTLRTYILFMAPPEKDAEWSDAGIEGVNRFLKRLWNNIYSILPRIKDVKVEKIELKNKQEKDLRRKLHQSIKKITEDIEGGFKFNTAIAGLMELNNNLSEYLNSAKDLNLPLLRELVEKLTLILSPFAPHMAEEIWHDLGNDTLVVNEEWPAYDENALKVDEVTVIIQINGKVRGKIQTKVDVSEGEIKKLAFENAKIASYVDGREIVKVIYVKNKLLNIVVK.

The short motif at 41 to 51 (PYPSGTLHVGH) is the 'HIGH' region element. A 'KMSKS' region motif is present at residues 580-584 (KMSKS). Lysine 583 is an ATP binding site.

Belongs to the class-I aminoacyl-tRNA synthetase family.

It is found in the cytoplasm. It carries out the reaction tRNA(Leu) + L-leucine + ATP = L-leucyl-tRNA(Leu) + AMP + diphosphate. This chain is Leucine--tRNA ligase, found in Thermosipho melanesiensis (strain DSM 12029 / CIP 104789 / BI429).